Here is a 322-residue protein sequence, read N- to C-terminus: 3-hydroxyacyl-CoA dehydrogenase FVEG_12628 (322 aa).

A helical membrane pass occupies residues 5–25 (IRTVAIVGCGVIGMGWAVLFL). Catalysis depends on E151, which acts as the For hydroxyacyl-coenzyme A dehydrogenase activity.

It belongs to the 3-hydroxyacyl-CoA dehydrogenase family.

The protein resides in the membrane. 3-hydroxyacyl-CoA dehydrogenase; part of the Fusarium detoxification of benzoxazolinone cluster 2 (FDB2) involved in the degradation of benzoxazolinones produced by the host plant. Maize, wheat, and rye produce the 2 benzoxazinone phytoanticipins 2,4-dihy-droxy-7-methoxy-1,4-benzoxazin-3-one (DIMBOA) and 2,4-dihydroxy-1,4-benzoxazin-3-one (DIBOA) that, due to their inherent instability once released, spontaneously degrade to the more stable corresponding benzoxazolinones, 6-methoxy-2-benzoxazolinone (MBOA) and 2-benzoxazolinone (BOA), respectively. The first step in the detoxification of benzoxazolinones involves the hydrolysis of the cyclic ester bond of benzoxazolinones by the FDB1 cluster gamma-lactamase MBL1 to aminophenols. MBL1 is able to convert BOA into 2-aminophenol (2-AP), as well as MBOA into 5-methoxy-2-aminophenol (2-AMP). The FDB2 cluster N-malonyltransferase FDB2/NAT1 then metabolizes aminophenols via N-malonylation to non-toxic malonamic acids. FDB2/NAT1 converts 2-AP into N-(2-hydroxyphenyl) malonamic acid (HPMA) and 2-AMP into N-(2-hydroxy-4-methoxyphenyl) malonamic acid (HMPMA). The duplicated dienlactone hydrolases DLH1 and DLH2 may provide redundant function for hydrolyzing the lactone moiety in the BOA molecule. The roles of the amidases an other enzymes encoded by the 2 FDB clusters have not been identified so far. The polypeptide is 3-hydroxyacyl-CoA dehydrogenase FVEG_12628 (Gibberella moniliformis (strain M3125 / FGSC 7600) (Maize ear and stalk rot fungus)).